We begin with the raw amino-acid sequence, 224 residues long: Glutathione S-transferase Mu 5 (224 aa).

The GST N-terminal domain maps to 4-91 (KSMVLGYWDI…YIARKHNMCG (88 aa)). At S5 the chain carries Phosphoserine. Residues 10-11 (YW), 49-53 (WLDVK), 62-63 (NL), and 75-76 (QS) each bind glutathione. The GST C-terminal domain occupies 93 to 211 (TEEEKIRVDI…QSDRFFKMPI (119 aa)). Y119 is a substrate binding site.

It belongs to the GST superfamily. Mu family. As to quaternary structure, homodimer. Interacts with PFKM isoform 2 and isoform 3 (via N-terminal testis-specific region).

The protein localises to the cytoplasm. It carries out the reaction RX + glutathione = an S-substituted glutathione + a halide anion + H(+). Functionally, conjugation of reduced glutathione to a wide number of exogenous and endogenous hydrophobic electrophiles. This chain is Glutathione S-transferase Mu 5 (Gstm5), found in Mus musculus (Mouse).